A 321-amino-acid polypeptide reads, in one-letter code: Urease accessory protein UreD (321 aa).

This sequence belongs to the UreD family. In terms of assembly, ureD, UreF and UreG form a complex that acts as a GTP-hydrolysis-dependent molecular chaperone, activating the urease apoprotein by helping to assemble the nickel containing metallocenter of UreC. The UreE protein probably delivers the nickel.

It localises to the cytoplasm. Required for maturation of urease via the functional incorporation of the urease nickel metallocenter. This chain is Urease accessory protein UreD, found in Yersinia pseudotuberculosis serotype O:1b (strain IP 31758).